The sequence spans 332 residues: Serpentine receptor class gamma-3 (332 aa).

7 helical membrane passes run 23–43, 72–92, 101–121, 144–164, 184–204, 231–251, and 263–283; these read FAYL…IWVS, LIFT…SEIV, IYYC…IFIA, IMLI…LISD, WASL…ITMV, AALI…FAFF, and YLRF…LLLV.

This sequence belongs to the nematode receptor-like protein srg family.

The protein resides in the membrane. This is Serpentine receptor class gamma-3 (srg-3) from Caenorhabditis elegans.